Consider the following 208-residue polypeptide: Outer-membrane lipoprotein carrier protein (208 aa).

Positions methionine 1–alanine 23 are cleaved as a signal peptide.

Belongs to the LolA family. As to quaternary structure, monomer.

The protein localises to the periplasm. Participates in the translocation of lipoproteins from the inner membrane to the outer membrane. Only forms a complex with a lipoprotein if the residue after the N-terminal Cys is not an aspartate (The Asp acts as a targeting signal to indicate that the lipoprotein should stay in the inner membrane). The sequence is that of Outer-membrane lipoprotein carrier protein from Actinobacillus succinogenes (strain ATCC 55618 / DSM 22257 / CCUG 43843 / 130Z).